The sequence spans 1441 residues: Probable cleavage and polyadenylation specificity factor subunit 1 (1441 aa).

It belongs to the CPSF1 family. CPSF is a heterotetramer composed of four distinct subunits 160, 100, 70 and 30 kDa.

The protein resides in the nucleus. Functionally, CPSF plays a key role in pre-mRNA 3'-end formation, recognizing the AAUAAA signal sequence and interacting with poly(A)polymerase and other factors to bring about cleavage and poly(A) addition. This subunit is involved in the RNA recognition step of the polyadenylation reaction. The sequence is that of Probable cleavage and polyadenylation specificity factor subunit 1 from Oryza sativa subsp. japonica (Rice).